An 856-amino-acid polypeptide reads, in one-letter code: Inactive rhomboid protein 1 (856 aa).

Residues 1 to 20 form a disordered region; sequence MSEARRDSTSSLQRKKPPWL. Residues 1–412 lie on the Cytoplasmic side of the membrane; that stretch reads MSEARRDSTS…HRPFFTYWLT (412 aa). Residues Ser-76 and Ser-176 each carry the phosphoserine modification. Phosphothreonine is present on residues Thr-180 and Thr-183. Residue Ser-391 is modified to Phosphoserine. Residues 413 to 433 traverse the membrane as a helical segment; it reads FVHSLVTILAVCIYGIAPVGF. At 434–656 the chain is on the lumenal side; sequence SQHETVDSVL…NPEVPDQFYR (223 aa). Residue Asn-584 is glycosylated (N-linked (GlcNAc...) asparagine). The chain crosses the membrane as a helical span at residues 657–677; the sequence is LWLSLFLHAGILHCLVSVCFQ. At 678-692 the chain is on the cytoplasmic side; it reads MTVLRDLEKLAGWHR. The chain crosses the membrane as a helical span at residues 693–713; the sequence is IAIIYLLSGVTGNLASAIFLP. Over 714–715 the chain is Lumenal; sequence YR. A helical membrane pass occupies residues 716-736; that stretch reads AEVGPAGSQFGILACLFVELF. The Cytoplasmic portion of the chain corresponds to 737–747; it reads QSWQILARPWR. Residues 748–768 form a helical membrane-spanning segment; sequence AFFKLLAVVLFLFAFGLLPWI. Topologically, residues 769-773 are lumenal; it reads DNFAH. The helical transmembrane segment at 774-794 threads the bilayer; the sequence is ISGFVSGLFLSFAFLPYISFG. Topologically, residues 795–804 are cytoplasmic; it reads KFDLYRKRCQ. The chain crosses the membrane as a helical span at residues 805-825; sequence IIIFQAVFLGLLAGLVVLFYF. At 826 to 856 the chain is on the lumenal side; sequence YPVRCEWCEFLTCIPFTDKFCEKYELDAQLH.

This sequence belongs to the peptidase S54 family. As to quaternary structure, homodimer, or homooligomer. Interacts with TGFA and HBEGF. Interacts with EGF; may retain EGF in the endoplasmic reticulum and regulates its degradation through the endoplasmic reticulum-associated degradation (ERAD). Interacts (via cytoplasmic N-terminus) with FRMD8/iTAP; this interaction leads to mutual protein stabilization. Interacts with ADAM17/TACE.

The protein resides in the endoplasmic reticulum membrane. It is found in the golgi apparatus membrane. Its function is as follows. Regulates ADAM17 protease, a sheddase of the epidermal growth factor (EGF) receptor ligands and TNF, thereby plays a role in sleep, cell survival, proliferation, migration and inflammation. Does not exhibit any protease activity on its own. In Rattus norvegicus (Rat), this protein is Inactive rhomboid protein 1 (Rhbdf1).